We begin with the raw amino-acid sequence, 347 residues long: Transcription factor JunD (347 aa).

Positions 1 to 43 are disordered; it reads METPFYGDEALSGLGGGASGSGGSFASPGRLFPGAPPTAAAGS. Over residues 13–23 the composition is skewed to gly residues; sequence GLGGGASGSGG. Residues 27 to 39 carry the Menin-binding motif (MBM) motif; that stretch reads SPGRLFPGAPPTA. Residues 46–55 carry the MAP kinase docking motif; essential for its phosphorylation motif; it reads KKDALTLSLS. The tract at residues 62 to 86 is disordered; sequence LKPAAAPPPTPLRADGAPSAAPPDG. The segment covering 73–86 has biased composition (low complexity); that stretch reads LRADGAPSAAPPDG. Residue S90 is modified to Phosphoserine. S100 is subject to Phosphoserine; by MAPK8. T117 bears the Phosphothreonine mark. Residues 244 to 264 are disordered; sequence QTVPDVPSFGESPPLSPIDMD. 3 positions are modified to phosphoserine: S251, S255, and S259. The interval 268 to 295 is basic motif; sequence RIKAERKRLRNRIAASKCRKRKLERISR. The bZIP domain occupies 268 to 331; sequence RIKAERKRLR…AQLKQKVLSH (64 aa). Positions 296-324 are leucine-zipper; that stretch reads LEEKVKTLKSQNTELASTASLLREQVAQL.

This sequence belongs to the bZIP family. Jun subfamily. As to quaternary structure, heterodimer; binds DNA as a heterodimer. Component of an AP-1 transcription factor complex composed of JUN-FOS heterodimers. As part of the AP-1 transcription factor complex, forms heterodimers with FOS proteins, thereby binding to the AP-1 consensus sequence and stimulating transcription. Forms heterodimers with FOSB; thereby binding to the AP-1 consensus sequence. Interacts (via MBM motif) with MEN1; this interaction represses transcriptional activation. Interacts with MAPK10; this interaction is inhibited in the presence of MEN1. In terms of processing, phosphorylated by MAP kinases MAPK8 and MAPK10; phosphorylation is inhibited in the presence of MEN1.

It is found in the nucleus. Transcription factor binding AP-1 sites. Heterodimerizes with proteins of the FOS family to form an AP-1 transcription factor complex, thereby enhancing their DNA binding activity to an AP-1 consensus sequence 3'-TGA[GC]TCA-5' and enhancing their transcriptional activity. The chain is Transcription factor JunD (JUND) from Homo sapiens (Human).